The following is a 143-amino-acid chain: Turripeptide VIII-01 (143 aa).

The first 23 residues, 1-23 (MALSLDILMSVTMVTAVLTTVNA), serve as a signal peptide directing secretion. Residues 24-32 (EYKDSRLDS) constitute a propeptide that is removed on maturation.

Contains 4 disulfide bonds. In terms of tissue distribution, expressed by the venom duct.

It localises to the secreted. The sequence is that of Turripeptide VIII-01 from Gemmula speciosa (Splendid gem-turris).